The chain runs to 119 residues: Flagellar transcriptional regulator FlhD (119 aa).

The protein belongs to the FlhD family. In terms of assembly, homodimer; disulfide-linked. Forms a heterohexamer composed of two FlhC and four FlhD subunits. Each FlhC binds a FlhD dimer, forming a heterotrimer, and a hexamer assembles by dimerization of two heterotrimers.

The protein resides in the cytoplasm. Its function is as follows. Functions in complex with FlhC as a master transcriptional regulator that regulates transcription of several flagellar and non-flagellar operons by binding to their promoter region. Activates expression of class 2 flagellar genes, including fliA, which is a flagellum-specific sigma factor that turns on the class 3 genes. Also regulates genes whose products function in a variety of physiological pathways. The protein is Flagellar transcriptional regulator FlhD of Enterobacter sp. (strain 638).